A 40-amino-acid chain; its full sequence is Dermonecrotic toxin LgSicTox-alphaI-1 (40 aa).

Positions 32 and 34 each coordinate Mg(2+).

Belongs to the arthropod phospholipase D family. Class II subfamily. The cofactor is Mg(2+). Post-translationally, contains 2 disulfide bonds. As to expression, expressed by the venom gland.

Its subcellular location is the secreted. The catalysed reaction is an N-(acyl)-sphingosylphosphocholine = an N-(acyl)-sphingosyl-1,3-cyclic phosphate + choline. It carries out the reaction an N-(acyl)-sphingosylphosphoethanolamine = an N-(acyl)-sphingosyl-1,3-cyclic phosphate + ethanolamine. The enzyme catalyses a 1-acyl-sn-glycero-3-phosphocholine = a 1-acyl-sn-glycero-2,3-cyclic phosphate + choline. It catalyses the reaction a 1-acyl-sn-glycero-3-phosphoethanolamine = a 1-acyl-sn-glycero-2,3-cyclic phosphate + ethanolamine. Dermonecrotic toxins cleave the phosphodiester linkage between the phosphate and headgroup of certain phospholipids (sphingolipid and lysolipid substrates), forming an alcohol (often choline) and a cyclic phosphate. This toxin acts on sphingomyelin (SM). It may also act on ceramide phosphoethanolamine (CPE), lysophosphatidylcholine (LPC) and lysophosphatidylethanolamine (LPE), but not on lysophosphatidylserine (LPS), and lysophosphatidylglycerol (LPG). It acts by transphosphatidylation, releasing exclusively cyclic phosphate products as second products. In vivo, intradermal injection induces dermonecrosis. Induces, hemolysis, vascular permeability, edema, inflammatory response, and platelet aggregation. This Loxosceles gaucho (Spider) protein is Dermonecrotic toxin LgSicTox-alphaI-1.